Consider the following 122-residue polypeptide: Prefoldin subunit 1 (122 aa).

N-acetylalanine is present on Ala-2.

It belongs to the prefoldin subunit beta family. Heterohexamer of two PFD-alpha type and four PFD-beta type subunits.

Its function is as follows. Binds specifically to cytosolic chaperonin (c-CPN) and transfers target proteins to it. Binds to nascent polypeptide chain and promotes folding in an environment in which there are many competing pathways for nonnative proteins. This is Prefoldin subunit 1 (Pfdn1) from Mus musculus (Mouse).